Here is a 406-residue protein sequence, read N- to C-terminus: Phosphopentomutase (406 aa).

Positions 10, 305, 310, 346, 347, and 358 each coordinate Mn(2+).

Belongs to the phosphopentomutase family. Requires Mn(2+) as cofactor.

It localises to the cytoplasm. The enzyme catalyses 2-deoxy-alpha-D-ribose 1-phosphate = 2-deoxy-D-ribose 5-phosphate. The catalysed reaction is alpha-D-ribose 1-phosphate = D-ribose 5-phosphate. It functions in the pathway carbohydrate degradation; 2-deoxy-D-ribose 1-phosphate degradation; D-glyceraldehyde 3-phosphate and acetaldehyde from 2-deoxy-alpha-D-ribose 1-phosphate: step 1/2. Its function is as follows. Isomerase that catalyzes the conversion of deoxy-ribose 1-phosphate (dRib-1-P) and ribose 1-phosphate (Rib-1-P) to deoxy-ribose 5-phosphate (dRib-5-P) and ribose 5-phosphate (Rib-5-P), respectively. The chain is Phosphopentomutase from Aliivibrio fischeri (strain MJ11) (Vibrio fischeri).